Reading from the N-terminus, the 946-residue chain is Protein TMA108 (946 aa).

Residue Ser2 is modified to N-acetylserine. 293-297 (MAMEN) is a substrate binding site. Position 330 (His330) interacts with Zn(2+). The active-site Proton acceptor is the Glu331. Residues His334 and Glu353 each coordinate Zn(2+).

It belongs to the peptidase M1 family. In terms of assembly, associates with ribosomal complexes. Requires Zn(2+) as cofactor.

Its subcellular location is the cytoplasm. Its function is as follows. Putative zinc aminopeptidase which may be involved in ribosome biogenesis. This Saccharomyces cerevisiae (strain ATCC 204508 / S288c) (Baker's yeast) protein is Protein TMA108 (TMA108).